Reading from the N-terminus, the 459-residue chain is MGSIVEPWAAIAENGNANVTAKGSSRELRHGRTAHNMSSSSLRKKSDLRLVQKVPCKTLKNILSNLQEVILGTKLTLLFLAIPLAILANSYNYGRPLIFGLSLIGLTPLAERVSFLTEQLAFYTGPTVGGLLNATCGNATELIIAILALANNKVAVVKYSLLGSILSNLLLVLGTSLFFGGIANIRREQRFDRKQADVNFFLLLMGLLCHLLPLLLKYAATGEVSTSMINKMSLTLSRTSSIVMLIAYIAYLIFQLWTHRQLFEAQQDDDDAYDDEVSVEETPVIGFWSGFAWLVGMTIVIALLSEYVVDTIEDASDSWGLSVSFISIILLPIVGNAAEHAGAIIFAFKNKLDISLGVALGSATQISLFVVPLSVIVAWILGIKMDLNFNILETSSLALAIIITAFTLQDGTSHYMKGLVLLLCYVIIAACFFVDQIPQPNDLDVGLQPMNNLGEVFSA.

Topologically, residues 1 to 67 (MGSIVEPWAA…TLKNILSNLQ (67 aa)) are cytoplasmic. A helical transmembrane segment spans residues 68–88 (EVILGTKLTLLFLAIPLAILA). Residues 89 to 95 (NSYNYGR) lie on the Extracellular side of the membrane. The helical transmembrane segment at 96 to 116 (PLIFGLSLIGLTPLAERVSFL) threads the bilayer. Over 117-129 (TEQLAFYTGPTVG) the chain is Cytoplasmic. A helical membrane pass occupies residues 130-150 (GLLNATCGNATELIIAILALA). The interval 137 to 172 (GNATELIIAILALANNKVAVVKYSLLGSILSNLLLV) is cation selection. Topologically, residues 151 to 161 (NNKVAVVKYSL) are extracellular. A helical transmembrane segment spans residues 162–182 (LGSILSNLLLVLGTSLFFGGI). The Cytoplasmic portion of the chain corresponds to 183 to 195 (ANIRREQRFDRKQ). The helical transmembrane segment at 196–216 (ADVNFFLLLMGLLCHLLPLLL) threads the bilayer. The Extracellular segment spans residues 217–238 (KYAATGEVSTSMINKMSLTLSR). A helical membrane pass occupies residues 239-259 (TSSIVMLIAYIAYLIFQLWTH). Over 260–283 (RQLFEAQQDDDDAYDDEVSVEETP) the chain is Cytoplasmic. Residues 284–304 (VIGFWSGFAWLVGMTIVIALL) traverse the membrane as a helical segment. Topologically, residues 305 to 327 (SEYVVDTIEDASDSWGLSVSFIS) are extracellular. The helical transmembrane segment at 328-348 (IILLPIVGNAAEHAGAIIFAF) threads the bilayer. The interval 335–370 (GNAAEHAGAIIFAFKNKLDISLGVALGSATQISLFV) is cation selection. Residues 349-362 (KNKLDISLGVALGS) lie on the Cytoplasmic side of the membrane. A helical membrane pass occupies residues 363–383 (ATQISLFVVPLSVIVAWILGI). The Extracellular portion of the chain corresponds to 384–386 (KMD). A helical transmembrane segment spans residues 387 to 407 (LNFNILETSSLALAIIITAFT). Topologically, residues 408–417 (LQDGTSHYMK) are cytoplasmic. A helical membrane pass occupies residues 418-438 (GLVLLLCYVIIAACFFVDQIP). The Extracellular segment spans residues 439-459 (QPNDLDVGLQPMNNLGEVFSA).

Belongs to the Ca(2+):cation antiporter (CaCA) (TC 2.A.19) family. Cation/proton exchanger (CAX) subfamily. Expressed in roots, stems and flowers.

Its subcellular location is the vacuole membrane. Inhibited by excess of Ca(2+). Its function is as follows. Vacuolar cation/proton exchanger (CAX). Translocates Ca(2+) and other metal ions into vacuoles using the proton gradient formed by H(+)-ATPase and H(+)-pyrophosphatase. Involved in ion homeostasis in association with CAX1. The polypeptide is Vacuolar cation/proton exchanger 3 (CAX3) (Arabidopsis thaliana (Mouse-ear cress)).